Here is a 157-residue protein sequence, read N- to C-terminus: uncharacterized protein (157 aa).

The protein belongs to the MG067/MG068/MG395 family.

This is an uncharacterized protein from Mycoplasma pneumoniae (strain ATCC 29342 / M129 / Subtype 1) (Mycoplasmoides pneumoniae).